Here is a 327-residue protein sequence, read N- to C-terminus: Phosphate acyltransferase (327 aa).

The protein belongs to the PlsX family. Homodimer. Probably interacts with PlsY.

It localises to the cytoplasm. The catalysed reaction is a fatty acyl-[ACP] + phosphate = an acyl phosphate + holo-[ACP]. The protein operates within lipid metabolism; phospholipid metabolism. Functionally, catalyzes the reversible formation of acyl-phosphate (acyl-PO(4)) from acyl-[acyl-carrier-protein] (acyl-ACP). This enzyme utilizes acyl-ACP as fatty acyl donor, but not acyl-CoA. This is Phosphate acyltransferase from Thermotoga neapolitana (strain ATCC 49049 / DSM 4359 / NBRC 107923 / NS-E).